A 471-amino-acid chain; its full sequence is MNMANFLRGFEEKGIKNDRPEDQLSKEKKKILFSFCEVCNIQLNSAAQAQVHSNGKSHRKRVKQLSDGQPPPPAQASPSSNSSTGSTCHTTTLPALVRTPTLMMQPSLDIKPFMSFPVDSSSAVGLFPNFNTMDPVQKAVINHTFGVSIPPKKKQVISCNVCQLRFNSDSQAEAHYKGSKHAKKVKALDATKNKPKMVPSKDSAKANPSCSITPITGNNSDKSEDKGKLKASSSSQPSSSESGSFLLKSGTTPLPPGAATSPSKSTNGAPGTVVESEEEKAKKLLYCSLCKVAVNSLSQLEAHNTGSKHKTMVEARNGAGPIKSYPRPGSRLKMQNGSKGSGLQNKTFHCEICDVHVNSEIQLKQHISSRRHKDRVAGKPLKPKYSPYNKLQRSPSILAAKLAFQKDMMKPLAPAFLSSPLAAAAAVSSALSLPPRPSASLFQAPAIPPALLRPGHGPIRATPASILFAPY.

A required for induction of apoptosis region spans residues 1–93 (MNMANFLRGF…TGSTCHTTTL (93 aa)). The Matrin-type 1 zinc finger occupies 34–64 (SFCEVCNIQLNSAAQAQVHSNGKSHRKRVKQ). Disordered regions lie at residues 50–92 (QVHS…HTTT) and 175–275 (HYKG…TVVE). A compositionally biased stretch (low complexity) spans 76–92 (ASPSSNSSTGSTCHTTT). Residues 94 to 471 (PALVRTPTLM…TPASILFAPY (378 aa)) are interaction with p53/TP53. A Matrin-type 2 zinc finger spans residues 157-187 (ISCNVCQLRFNSDSQAEAHYKGSKHAKKVKA). Residues 206-220 (ANPSCSITPITGNNS) show a composition bias toward polar residues. Low complexity predominate over residues 230–250 (KASSSSQPSSSESGSFLLKSG). Residues 260-269 (TSPSKSTNGA) are compositionally biased toward polar residues. Residues 282–316 (KKLLYCSLCKVAVNSLSQLEAHNTGSKHKTMVEAR) form a Matrin-type 3 zinc finger. The interval 318 to 340 (GAGPIKSYPRPGSRLKMQNGSKG) is disordered. The Matrin-type 4 zinc finger occupies 348–378 (FHCEICDVHVNSEIQLKQHISSRRHKDRVAG).

In terms of assembly, interacts with p53/TP53; the interaction is direct. In terms of tissue distribution, detected in germinal center of lymph node (at protein level). Expressed in spleen, lymph node and tonsil.

Its subcellular location is the nucleus. Functionally, may play a role in p53/TP53-mediated apoptosis. The sequence is that of Zinc finger protein 385B (ZNF385B) from Homo sapiens (Human).